Here is a 178-residue protein sequence, read N- to C-terminus: Dual-action ribosomal maturation protein DarP (178 aa).

Over residues 1–14 (MTVSDHPQTVSQPD) the composition is skewed to polar residues. Positions 1 to 25 (MTVSDHPQTVSQPDPESESRPSKTR) are disordered.

This sequence belongs to the DarP family.

It is found in the cytoplasm. Its function is as follows. Member of a network of 50S ribosomal subunit biogenesis factors which assembles along the 30S-50S interface, preventing incorrect 23S rRNA structures from forming. Promotes peptidyl transferase center (PTC) maturation. The chain is Dual-action ribosomal maturation protein DarP from Nitrosomonas europaea (strain ATCC 19718 / CIP 103999 / KCTC 2705 / NBRC 14298).